The following is a 346-amino-acid chain: tRNA N6-adenosine threonylcarbamoyltransferase (346 aa).

Positions 111 and 115 each coordinate Fe cation. Substrate is bound by residues 134 to 138 (LVSGG), Asp167, Gly180, and Asn279. Asp307 provides a ligand contact to Fe cation.

It belongs to the KAE1 / TsaD family. The cofactor is Fe(2+).

It localises to the cytoplasm. It carries out the reaction L-threonylcarbamoyladenylate + adenosine(37) in tRNA = N(6)-L-threonylcarbamoyladenosine(37) in tRNA + AMP + H(+). Required for the formation of a threonylcarbamoyl group on adenosine at position 37 (t(6)A37) in tRNAs that read codons beginning with adenine. Is involved in the transfer of the threonylcarbamoyl moiety of threonylcarbamoyl-AMP (TC-AMP) to the N6 group of A37, together with TsaE and TsaB. TsaD likely plays a direct catalytic role in this reaction. The sequence is that of tRNA N6-adenosine threonylcarbamoyltransferase from Burkholderia pseudomallei (strain 1106a).